Reading from the N-terminus, the 132-residue chain is MVMTDPIADFLTRIRNANQVKHEVLEVPASNIKKGIAEILKREGFVKNVEVIEDDKQGIIRVFLKYGKNGERVITNLKRISKPGLRVYAKRDDMPKVLNGLGIAIISTSEGLLTDKEARQKNVGGEVIAYVW.

Belongs to the universal ribosomal protein uS8 family. Part of the 30S ribosomal subunit. Contacts proteins S5 and S12.

Its function is as follows. One of the primary rRNA binding proteins, it binds directly to 16S rRNA central domain where it helps coordinate assembly of the platform of the 30S subunit. This chain is Small ribosomal subunit protein uS8, found in Streptococcus pyogenes serotype M1.